The chain runs to 227 residues: Probable N-acetyltransferase family 8 member 5 (227 aa).

The next 3 helical transmembrane spans lie at 29–49 (IPAA…LFVM), 53–73 (IVLV…LLLL), and 201–221 (ISII…SFPS). The N-acetyltransferase domain occupies 69–213 (FLLLLLRLLA…IKWLITFSII (145 aa)).

Belongs to the camello family.

The protein resides in the membrane. Its function is as follows. May play a role in regulation of gastrulation. The protein is Probable N-acetyltransferase family 8 member 5 of Mus musculus (Mouse).